Reading from the N-terminus, the 120-residue chain is Accessory gland protein Acp53Ea (120 aa).

The N-terminal stretch at Met1–Ala23 is a signal peptide.

In terms of tissue distribution, main cells of accessory gland and seminal fluid.

It is found in the secreted. Responsible for physiological and behavioral changes in mated female flies. The sequence is that of Accessory gland protein Acp53Ea (Acp53Ea) from Drosophila melanogaster (Fruit fly).